The primary structure comprises 200 residues: Anthranilate synthase component 2, pyocyanine specific (200 aa).

A Glutamine amidotransferase type-1 domain is found at 2 to 195 (RITLLDNFDS…LLWCGALAVR (194 aa)). 56–58 (GPG) is a binding site for L-glutamine. Cysteine 83 acts as the Nucleophile; for GATase activity in catalysis. L-glutamine-binding positions include glutamine 87 and 133–134 (SL). Residues histidine 169 and glutamate 171 each act as for GATase activity in the active site.

In terms of assembly, heterotetramer consisting of two non-identical subunits: a beta subunit (PhnB) and a large alpha subunit (PhnA).

It carries out the reaction chorismate + L-glutamine = anthranilate + pyruvate + L-glutamate + H(+). It functions in the pathway secondary metabolite biosynthesis; pyocyanine biosynthesis. In terms of biological role, part of a heterotetrameric complex that catalyzes the two-step biosynthesis of anthranilate, a precursor for Pseudomonas quinolone signal (2-heptyl-3-hydroxy-4-quinolone; PQS) production which is required to induce the genes for the biosynthesis of the virulence factor pyocyanine (PCN), a characteristic blue-green phenazine pigment produced by P.aeruginosa. In the first step, the glutamine-binding beta subunit (PhnB) of anthranilate synthase (AS) provides the glutamine amidotransferase activity which generates ammonia as a substrate that, along with chorismate, is used in the second step, catalyzed by the large alpha subunit of AS (PhnA) to produce anthranilate. In Pseudomonas aeruginosa (strain ATCC 15692 / DSM 22644 / CIP 104116 / JCM 14847 / LMG 12228 / 1C / PRS 101 / PAO1), this protein is Anthranilate synthase component 2, pyocyanine specific.